Here is a 245-residue protein sequence, read N- to C-terminus: tRNA pseudouridine synthase A (245 aa).

The active-site Nucleophile is the D52. Y111 lines the substrate pocket.

Belongs to the tRNA pseudouridine synthase TruA family. Homodimer.

It catalyses the reaction uridine(38/39/40) in tRNA = pseudouridine(38/39/40) in tRNA. Its function is as follows. Formation of pseudouridine at positions 38, 39 and 40 in the anticodon stem and loop of transfer RNAs. This chain is tRNA pseudouridine synthase A, found in Bradyrhizobium diazoefficiens (strain JCM 10833 / BCRC 13528 / IAM 13628 / NBRC 14792 / USDA 110).